Consider the following 167-residue polypeptide: uncharacterized protein (167 aa).

This is an uncharacterized protein from Mycobacterium tuberculosis (strain CDC 1551 / Oshkosh).